The sequence spans 644 residues: Zinc finger protein 74 (644 aa).

One can recognise a KRAB domain in the interval 43–114 (VSFKDVAVDF…QREVPRGPCP (72 aa)). C2H2-type zinc fingers lie at residues 248–270 (FVCG…RRWH), 276–298 (YKCD…RRIH), 304–326 (FFCG…QRIH), 332–354 (YKCS…LRVH), 360–382 (YRCG…HRIH), 388–410 (YQCG…EKIH), 416–438 (FKCS…QRTH), 444–466 (FKCA…RRIH), 472–494 (FKCN…RRIH), 500–522 (FDCS…QRIH), 528–550 (YKCS…QKIH), and 556–578 (FKCE…QRLH). A Glycyl lysine isopeptide (Lys-Gly) (interchain with G-Cter in SUMO2) cross-link involves residue Lys582.

It belongs to the krueppel C2H2-type zinc-finger protein family. In terms of tissue distribution, highly expressed in the fetal brain.

It is found in the nucleus. In terms of biological role, may play a role in RNA metabolism. The chain is Zinc finger protein 74 (ZNF74) from Homo sapiens (Human).